A 148-amino-acid polypeptide reads, in one-letter code: Putative nickel-responsive regulator (148 aa).

Ni(2+) contacts are provided by His-88, His-99, His-101, and Cys-107.

This sequence belongs to the transcriptional regulatory CopG/NikR family. It depends on Ni(2+) as a cofactor.

In terms of biological role, transcriptional regulator. In Helicobacter pylori (strain HPAG1), this protein is Putative nickel-responsive regulator.